The chain runs to 344 residues: L-rhamnose-proton symporter (344 aa).

The next 10 helical transmembrane spans lie at 4–24, 38–58, 68–88, 101–121, 137–157, 175–195, 214–234, 259–279, 290–310, and 323–343; these read AITM…CFYA, WSVG…ALLL, FSLS…IGNI, MGIG…TPII, TLLG…AGQL, LVLA…MNAA, LPSY…FCFI, VLLS…YAWG, ISWM…GLVL, and VLSL…IGMA.

The protein belongs to the L-rhamnose transporter (TC 2.A.7.6) family.

Its subcellular location is the cell inner membrane. The catalysed reaction is L-rhamnopyranose(in) + H(+)(in) = L-rhamnopyranose(out) + H(+)(out). Its function is as follows. Uptake of L-rhamnose across the cytoplasmic membrane with the concomitant transport of protons into the cell (symport system). The protein is L-rhamnose-proton symporter of Escherichia coli O127:H6 (strain E2348/69 / EPEC).